A 492-amino-acid polypeptide reads, in one-letter code: 2,3-bisphosphoglycerate-independent phosphoglycerate mutase (492 aa).

Mn(2+)-binding residues include aspartate 11 and serine 61. The Phosphoserine intermediate role is filled by serine 61. Residues histidine 118, arginine 147 to aspartate 148, arginine 178, arginine 184, arginine 248 to arginine 251, and lysine 320 contribute to the substrate site. Aspartate 386, histidine 390, aspartate 427, histidine 428, and histidine 445 together coordinate Mn(2+).

This sequence belongs to the BPG-independent phosphoglycerate mutase family. In terms of assembly, monomer. It depends on Mn(2+) as a cofactor.

It catalyses the reaction (2R)-2-phosphoglycerate = (2R)-3-phosphoglycerate. It participates in carbohydrate degradation; glycolysis; pyruvate from D-glyceraldehyde 3-phosphate: step 3/5. In terms of biological role, catalyzes the interconversion of 2-phosphoglycerate and 3-phosphoglycerate. The protein is 2,3-bisphosphoglycerate-independent phosphoglycerate mutase of Campylobacter jejuni subsp. jejuni serotype O:23/36 (strain 81-176).